Here is a 505-residue protein sequence, read N- to C-terminus: Lysine--tRNA ligase (505 aa).

Mg(2+) is bound by residues Glu-415 and Glu-422.

The protein belongs to the class-II aminoacyl-tRNA synthetase family. In terms of assembly, homodimer. The cofactor is Mg(2+).

The protein localises to the cytoplasm. It catalyses the reaction tRNA(Lys) + L-lysine + ATP = L-lysyl-tRNA(Lys) + AMP + diphosphate. This chain is Lysine--tRNA ligase, found in Serratia proteamaculans (strain 568).